The chain runs to 184 residues: Elongation factor P (184 aa).

It belongs to the elongation factor P family.

It localises to the cytoplasm. Its pathway is protein biosynthesis; polypeptide chain elongation. In terms of biological role, involved in peptide bond synthesis. Stimulates efficient translation and peptide-bond synthesis on native or reconstituted 70S ribosomes in vitro. Probably functions indirectly by altering the affinity of the ribosome for aminoacyl-tRNA, thus increasing their reactivity as acceptors for peptidyl transferase. The chain is Elongation factor P from Acidovorax ebreus (strain TPSY) (Diaphorobacter sp. (strain TPSY)).